Reading from the N-terminus, the 250-residue chain is Proteasome subunit alpha type-4-1 (250 aa).

Belongs to the peptidase T1A family. The 26S proteasome consists of a 20S proteasome core and two 19S regulatory subunits. The 20S proteasome core is composed of 28 subunits that are arranged in four stacked rings, resulting in a barrel-shaped structure. The two end rings are each formed by seven alpha subunits, and the two central rings are each formed by seven beta subunits. The catalytic chamber with the active sites is on the inside of the barrel.

The protein localises to the cytoplasm. It is found in the nucleus. The proteasome is a multicatalytic proteinase complex which is characterized by its ability to cleave peptides with Arg, Phe, Tyr, Leu, and Glu adjacent to the leaving group at neutral or slightly basic pH. The proteasome has an ATP-dependent proteolytic activity. The polypeptide is Proteasome subunit alpha type-4-1 (Oryza sativa subsp. indica (Rice)).